Here is a 259-residue protein sequence, read N- to C-terminus: Pimeloyl-[acyl-carrier protein] methyl ester esterase (259 aa).

An AB hydrolase-1 domain is found at 15–242 (HLVLLHGWGL…AAHAPFISHP (228 aa)). Residues Trp-22, 82–83 (SL), and 143–147 (FLALQ) each bind substrate. Ser-82 acts as the Nucleophile in catalysis. Catalysis depends on residues Asp-207 and His-235. Residue His-235 coordinates substrate.

This sequence belongs to the AB hydrolase superfamily. Carboxylesterase BioH family. In terms of assembly, monomer.

It localises to the cytoplasm. It catalyses the reaction 6-carboxyhexanoyl-[ACP] methyl ester + H2O = 6-carboxyhexanoyl-[ACP] + methanol + H(+). The protein operates within cofactor biosynthesis; biotin biosynthesis. The physiological role of BioH is to remove the methyl group introduced by BioC when the pimeloyl moiety is complete. It allows to synthesize pimeloyl-ACP via the fatty acid synthetic pathway through the hydrolysis of the ester bonds of pimeloyl-ACP esters. The chain is Pimeloyl-[acyl-carrier protein] methyl ester esterase from Cronobacter sakazakii (strain ATCC BAA-894) (Enterobacter sakazakii).